A 454-amino-acid chain; its full sequence is Tryptophanase (454 aa).

Residue Lys256 is modified to N6-(pyridoxal phosphate)lysine.

This sequence belongs to the beta-eliminating lyase family. As to quaternary structure, homotetramer. Pyridoxal 5'-phosphate is required as a cofactor.

The catalysed reaction is L-tryptophan + H2O = indole + pyruvate + NH4(+). It functions in the pathway amino-acid degradation; L-tryptophan degradation via pyruvate pathway; indole and pyruvate from L-tryptophan: step 1/1. This is Tryptophanase from Hyphomonas neptunium (strain ATCC 15444).